The following is a 490-amino-acid chain: UDP-N-acetylmuramyl-tripeptide synthetase (490 aa).

ATP is bound at residue 113-119; it reads GTDGKTT. UDP-N-acetyl-alpha-D-muramoyl-L-alanyl-D-glutamate is bound by residues 158–159, S185, and R193; that span reads TT. K225 carries the post-translational modification N6-carboxylysine.

This sequence belongs to the MurCDEF family. MurE subfamily. Carboxylation is probably crucial for Mg(2+) binding and, consequently, for the gamma-phosphate positioning of ATP.

It localises to the cytoplasm. It participates in cell wall biogenesis; peptidoglycan biosynthesis. Catalyzes the addition of an amino acid to the nucleotide precursor UDP-N-acetylmuramoyl-L-alanyl-D-glutamate (UMAG) in the biosynthesis of bacterial cell-wall peptidoglycan. This chain is UDP-N-acetylmuramyl-tripeptide synthetase, found in Deinococcus radiodurans (strain ATCC 13939 / DSM 20539 / JCM 16871 / CCUG 27074 / LMG 4051 / NBRC 15346 / NCIMB 9279 / VKM B-1422 / R1).